A 127-amino-acid polypeptide reads, in one-letter code: Biogenesis of lysosome-related organelles complex 1 subunit 2 (127 aa).

This sequence belongs to the BLOC1S2 family. In terms of assembly, component of the biogenesis of lysosome-related organelles complex-1 (BLOC-1). Interacts with BLOS1 and SNX1.

The protein resides in the cytoplasm. It is found in the endosome. Its function is as follows. Component of the biogenesis of lysosome-related organelles complex-1 (BLOC-1), a complex that mediates the vacuolar degradative transport via the intracellular vesicle trafficking from the endosome to the vacuole. The chain is Biogenesis of lysosome-related organelles complex 1 subunit 2 (BLOS2) from Arabidopsis thaliana (Mouse-ear cress).